Here is a 287-residue protein sequence, read N- to C-terminus: Proteasome assembly chaperone 1 (287 aa).

The interval 1–32 (MATFFGEVQSVFSRAVDEDDEEEEGEEEEEDR) is disordered. The span at 17-32 (DEDDEEEEGEEEEEDR) shows a compositional bias: acidic residues.

Belongs to the PSMG1 family. In terms of assembly, forms a heterodimer with psmg2. Post-translationally, degraded by the proteasome upon completion of 20S proteasome maturation.

Its subcellular location is the cytoplasm. The protein localises to the endoplasmic reticulum. Functionally, chaperone protein which promotes assembly of the 20S proteasome as part of a heterodimer with psmg2. This Xenopus tropicalis (Western clawed frog) protein is Proteasome assembly chaperone 1.